A 27-amino-acid polypeptide reads, in one-letter code: U18-ctenitoxin-Co1a (27 aa).

Belongs to the u18-CNTX family. As to expression, expressed by the venom gland.

It localises to the secreted. Not toxic to mice by intracerebroventricular injection. The polypeptide is U18-ctenitoxin-Co1a (Ctenus ornatus (Brazilian spider)).